A 199-amino-acid chain; its full sequence is Fe/S biogenesis protein NfuA (199 aa).

2 residues coordinate [4Fe-4S] cluster: Cys-156 and Cys-159.

This sequence belongs to the NfuA family. In terms of assembly, homodimer. [4Fe-4S] cluster serves as cofactor.

Involved in iron-sulfur cluster biogenesis. Binds a 4Fe-4S cluster, can transfer this cluster to apoproteins, and thereby intervenes in the maturation of Fe/S proteins. Could also act as a scaffold/chaperone for damaged Fe/S proteins. This Haemophilus ducreyi (strain 35000HP / ATCC 700724) protein is Fe/S biogenesis protein NfuA.